The following is a 201-amino-acid chain: Potassium-transporting ATPase KdpC subunit (201 aa).

The chain crosses the membrane as a helical span at residues P7–M27.

The protein belongs to the KdpC family. As to quaternary structure, the system is composed of three essential subunits: KdpA, KdpB and KdpC.

Its subcellular location is the cell inner membrane. Its function is as follows. Part of the high-affinity ATP-driven potassium transport (or Kdp) system, which catalyzes the hydrolysis of ATP coupled with the electrogenic transport of potassium into the cytoplasm. This subunit acts as a catalytic chaperone that increases the ATP-binding affinity of the ATP-hydrolyzing subunit KdpB by the formation of a transient KdpB/KdpC/ATP ternary complex. The chain is Potassium-transporting ATPase KdpC subunit from Xanthobacter autotrophicus (strain ATCC BAA-1158 / Py2).